A 284-amino-acid polypeptide reads, in one-letter code: MDAIKKKMLAMKMEKENAVDRAEQNEQKLRDTEEQKAKIEEDLNNLQKKCANLENDFDNVNEQLQEAMAKLETSEKRVTEMEQEVSGTTRKITLLEEDLERNEERLQTATERLEEASKAADESERGARVLESRSLADDERIDQLEAQLKEAKYIAEDAERKYDEAARKLAITEVDLERAEARLEAAEAKILELEEELKVVGNNMKSLEISEQEASQREDSYEETIRDLTQRLKDAENRATEAERTVSKLQKEVDRLEDELLAEKEKYKAISDELDQTFAELAGY.

Residues 1 to 273 adopt a coiled-coil conformation; sequence MDAIKKKMLA…KEKYKAISDE (273 aa).

It belongs to the tropomyosin family. As to quaternary structure, homodimer.

Its function is as follows. Tropomyosin, in association with the troponin complex, plays a central role in the calcium dependent regulation of muscle contraction. This is Tropomyosin from Haliotis diversicolor (Abalone).